An 867-amino-acid polypeptide reads, in one-letter code: Transcription factor E2F8 (867 aa).

Residues 38 to 58 (DFGPLTTPTKPKEGSQGEPWT) form a disordered region. Phosphoserine is present on residues Ser71 and Ser102. DNA-binding regions lie at residues 113 to 182 (RKEK…TWHG) and 261 to 347 (RKDK…KWTG). Disordered regions lie at residues 408–432 (RRKINSAPSSPIKTNKAESSQNSAP), 532–616 (QSVT…SGSK), and 771–800 (APENAGTQQGRATNYDSPVPGQSQPNGQSV). 2 positions are modified to phosphoserine: Ser413 and Ser417. Composition is skewed to polar residues over residues 413–432 (SAPSSPIKTNKAESSQNSAP) and 532–556 (QSVTPPQGLSPTVCTTHSSKATGSK). The span at 557-567 (DSTDATTEKAA) shows a compositional bias: basic and acidic residues. Over residues 568-579 (NDTSKASASTRP) the composition is skewed to polar residues. Positions 594-604 (RTREPAGERGS) are enriched in basic and acidic residues. The segment covering 775-800 (AGTQQGRATNYDSPVPGQSQPNGQSV) has biased composition (polar residues).

The protein belongs to the E2F/DP family. Homodimer and heterodimer: mainly forms homodimers and, to a lesser extent, heterodimers with E2F8. Dimerization is important for DNA-binding. Interacts with HIF1A.

The protein localises to the nucleus. Functionally, atypical E2F transcription factor that participates in various processes such as angiogenesis and polyploidization of specialized cells. Mainly acts as a transcription repressor that binds DNA independently of DP proteins and specifically recognizes the E2 recognition site 5'-TTTC[CG]CGC-3'. Directly represses transcription of classical E2F transcription factors such as E2F1: component of a feedback loop in S phase by repressing the expression of E2F1, thereby preventing p53/TP53-dependent apoptosis. Plays a key role in polyploidization of cells in placenta and liver by regulating the endocycle, probably by repressing genes promoting cytokinesis and antagonizing action of classical E2F proteins (E2F1, E2F2 and/or E2F3). Required for placental development by promoting polyploidization of trophoblast giant cells. Acts as a promoter of sprouting angiogenesis, possibly by acting as a transcription activator: associates with HIF1A, recognizes and binds the VEGFA promoter, which is different from canonical E2 recognition site, and activates expression of the VEGFA gene. The polypeptide is Transcription factor E2F8 (E2F8) (Homo sapiens (Human)).